The sequence spans 193 residues: Nucleoside triphosphate pyrophosphatase (193 aa).

Catalysis depends on Asp70, which acts as the Proton acceptor.

It belongs to the Maf family. A divalent metal cation serves as cofactor.

It is found in the cytoplasm. The enzyme catalyses a ribonucleoside 5'-triphosphate + H2O = a ribonucleoside 5'-phosphate + diphosphate + H(+). The catalysed reaction is a 2'-deoxyribonucleoside 5'-triphosphate + H2O = a 2'-deoxyribonucleoside 5'-phosphate + diphosphate + H(+). In terms of biological role, nucleoside triphosphate pyrophosphatase. May have a dual role in cell division arrest and in preventing the incorporation of modified nucleotides into cellular nucleic acids. This is Nucleoside triphosphate pyrophosphatase from Anaplasma phagocytophilum (strain HZ).